Here is a 710-residue protein sequence, read N- to C-terminus: Early transcription factor 82 kDa subunit (710 aa).

Belongs to the poxviridae VETF large subunit family. As to quaternary structure, heterodimer of a 70 kDa and a 82 kDa subunit. Part of the early transcription complex composed of ETF, RAP94/OPG109, and the DNA-directed RNA polymerase.

The protein resides in the virion. Functionally, acts with RNA polymerase to initiate transcription from early gene promoters. Is recruited by the RPO-associated protein of 94 kDa RAP94/OPG109 to form the early transcription complex, which also contains the core RNA polymerase. ETF heterodimer binds to early gene promoters. This chain is Early transcription factor 82 kDa subunit (OPG133), found in Homo sapiens (Human).